We begin with the raw amino-acid sequence, 120 residues long: MENLSPLLIEYQGLLKLIRNIKAMALNGLWDDVVEQEIVYIQSIERISQINVPANIPSTVQLQFRQLLQDILDTESQVKELLQNRMQELAVLIQQSQNQKSINNTYAEFSDDILPGKPQP.

Positions 1 to 50 (MENLSPLLIEYQGLLKLIRNIKAMALNGLWDDVVEQEIVYIQSIERISQI) are required for homodimerization. The segment at 60–98 (VQLQFRQLLQDILDTESQVKELLQNRMQELAVLIQQSQN) is fliD binding.

The protein belongs to the FliT family. In terms of assembly, homodimer. Interacts with FliD and FlhC.

It localises to the cytoplasm. The protein localises to the cytosol. Its function is as follows. Dual-function protein that regulates the transcription of class 2 flagellar operons and that also acts as an export chaperone for the filament-capping protein FliD. As a transcriptional regulator, acts as an anti-FlhDC factor; it directly binds FlhC, thus inhibiting the binding of the FlhC/FlhD complex to class 2 promoters, resulting in decreased expression of class 2 flagellar operons. As a chaperone, effects FliD transition to the membrane by preventing its premature polymerization, and by directing it to the export apparatus. The polypeptide is Flagellar protein FliT (Dickeya chrysanthemi (Pectobacterium chrysanthemi)).